We begin with the raw amino-acid sequence, 740 residues long: Putative Pol polyprotein from transposon element Bs1 (740 aa).

The stretch at 469–503 (TAVAHNLLVQALFMDGRASDAYVVLEEMQNNGPFP) is one PPR repeat.

In terms of biological role, bs1 is probably an active plant retrotransposon. In Zea mays (Maize), this protein is Putative Pol polyprotein from transposon element Bs1.